Consider the following 437-residue polypeptide: Ribosomal protein uS12 methylthiotransferase RimO (437 aa).

One can recognise an MTTase N-terminal domain in the interval 4 to 114 (PRVSFVSLGC…VMAAVHEAAP (111 aa)). Positions 13, 49, 78, 145, 149, and 152 each coordinate [4Fe-4S] cluster. The Radical SAM core domain maps to 131 to 369 (LTPRHYAYLK…MQRQQKISAT (239 aa)). In terms of domain architecture, TRAM spans 372–437 (AKKVGKRLPV…DAYDLYGSAV (66 aa)).

This sequence belongs to the methylthiotransferase family. RimO subfamily. It depends on [4Fe-4S] cluster as a cofactor.

Its subcellular location is the cytoplasm. It carries out the reaction L-aspartate(89)-[ribosomal protein uS12]-hydrogen + (sulfur carrier)-SH + AH2 + 2 S-adenosyl-L-methionine = 3-methylsulfanyl-L-aspartate(89)-[ribosomal protein uS12]-hydrogen + (sulfur carrier)-H + 5'-deoxyadenosine + L-methionine + A + S-adenosyl-L-homocysteine + 2 H(+). In terms of biological role, catalyzes the methylthiolation of an aspartic acid residue of ribosomal protein uS12. The protein is Ribosomal protein uS12 methylthiotransferase RimO of Mesorhizobium japonicum (strain LMG 29417 / CECT 9101 / MAFF 303099) (Mesorhizobium loti (strain MAFF 303099)).